Consider the following 642-residue polypeptide: Assimilatory sulfite reductase (ferredoxin), chloroplastic (642 aa).

Residues 1–61 (MSSTFRAPAG…SSSSSSPIQA (61 aa)) constitute a chloroplast transit peptide. The disordered stretch occupies residues 46–74 (PVPPSASSSSSSPIQAVSTPAKPETATKR). Positions 503, 509, 549, and 553 each coordinate [4Fe-4S] cluster. Cysteine 553 lines the siroheme pocket.

It belongs to the nitrite and sulfite reductase 4Fe-4S domain family. As to quaternary structure, monomer. Interacts with ferredoxin. The cofactor is siroheme. Requires [4Fe-4S] cluster as cofactor. In terms of processing, phosphorylated; this phosphorylation reduces DNA-binding. As to expression, present in leaves and roots.

It is found in the plastid. Its subcellular location is the chloroplast stroma. The protein localises to the chloroplast nucleoid. It localises to the plastid stroma. It carries out the reaction hydrogen sulfide + 6 oxidized [2Fe-2S]-[ferredoxin] + 3 H2O = sulfite + 6 reduced [2Fe-2S]-[ferredoxin] + 7 H(+). Essential protein with sulfite reductase activity required in assimilatory sulfate reduction pathway during both primary and secondary metabolism and thus involved in development and growth. Its function is as follows. DNA-binding protein that binds to both double-stranded and single-stranded DNA without significant sequence specificity to reversibly repress the transcriptional activity of chloroplast nucleoids by promoting DNA compaction and possibly regulate DNA replication. The protein is Assimilatory sulfite reductase (ferredoxin), chloroplastic (SIR) of Arabidopsis thaliana (Mouse-ear cress).